Reading from the N-terminus, the 308-residue chain is Methionyl-tRNA formyltransferase (308 aa).

Position 110–113 (110–113) interacts with (6S)-5,6,7,8-tetrahydrofolate; that stretch reads SLLP.

Belongs to the Fmt family.

It carries out the reaction L-methionyl-tRNA(fMet) + (6R)-10-formyltetrahydrofolate = N-formyl-L-methionyl-tRNA(fMet) + (6S)-5,6,7,8-tetrahydrofolate + H(+). In terms of biological role, attaches a formyl group to the free amino group of methionyl-tRNA(fMet). The formyl group appears to play a dual role in the initiator identity of N-formylmethionyl-tRNA by promoting its recognition by IF2 and preventing the misappropriation of this tRNA by the elongation apparatus. The sequence is that of Methionyl-tRNA formyltransferase from Neisseria gonorrhoeae (strain NCCP11945).